Reading from the N-terminus, the 355-residue chain is Thiamine thiazole synthase, chloroplastic (355 aa).

The transit peptide at 1 to 42 (MAAMATTASSLLKTSFAGARLPAAARNPTVSVAPRTGGAICN) directs the protein to the chloroplast. Substrate-binding positions include A96, 116 to 117 (EQ), G124, and V189. C218 is modified (2,3-didehydroalanine (Cys)). Residues D220, H235, M287, and 297-299 (RMG) each bind substrate.

The protein belongs to the THI4 family. In terms of assembly, homooctamer. The cofactor is Fe cation. Post-translationally, during the catalytic reaction, a sulfide is transferred from Cys-218 to a reaction intermediate, generating a dehydroalanine residue.

It is found in the plastid. It localises to the chloroplast. It carries out the reaction [ADP-thiazole synthase]-L-cysteine + glycine + NAD(+) = [ADP-thiazole synthase]-dehydroalanine + ADP-5-ethyl-4-methylthiazole-2-carboxylate + nicotinamide + 3 H2O + 2 H(+). Involved in biosynthesis of the thiamine precursor thiazole. Catalyzes the conversion of NAD and glycine to adenosine diphosphate 5-(2-hydroxyethyl)-4-methylthiazole-2-carboxylic acid (ADT), an adenylated thiazole intermediate. The reaction includes an iron-dependent sulfide transfer from a conserved cysteine residue of the protein to a thiazole intermediate. The enzyme can only undergo a single turnover, which suggests it is a suicide enzyme. May have additional roles in adaptation to various stress conditions and in DNA damage tolerance. Required fot thiamine accumulation and disease resistance toward the bacterial pathogen Xanthomonas oryzae pv oryzae (Xoo) and the fungal pathogen Magnaporthe oryzae. During infection by Xoo, functions positively in the defense pathway initiated by the resistance genes XA3 and XA26 by promoting thiamine synthesis. May function upstream of the defense-related proteins peroxidases, phenylalanine ammonia-lyases and pathogenesis-related proteins. Its function is as follows. (Microbial infection) During infection by Xanthomonas oryzae pv oryzae (Xoo), THI1 interacts with the type III effector virulence factor xadA from Xoo, which is an adhesin-like outer membrane protein. This probably attenuates the function of THI1 in defense response. This Oryza sativa subsp. japonica (Rice) protein is Thiamine thiazole synthase, chloroplastic.